The primary structure comprises 215 residues: Cytochrome b6 (215 aa).

A helical membrane pass occupies residues 32–52; sequence IFYCLGGITLTCFLVQVATGF. Cys35 serves as a coordination point for heme c. Heme b is bound by residues His86 and His100. 3 consecutive transmembrane segments (helical) span residues 90–110, 116–136, and 186–206; these read ASMM…TGGF, LTWV…VTGY, and LHTF…FPMI. His187 and His202 together coordinate heme b.

Belongs to the cytochrome b family. PetB subfamily. As to quaternary structure, the 4 large subunits of the cytochrome b6-f complex are cytochrome b6, subunit IV (17 kDa polypeptide, PetD), cytochrome f and the Rieske protein, while the 4 small subunits are PetG, PetL, PetM and PetN. The complex functions as a dimer. Requires heme b as cofactor. Heme c is required as a cofactor.

It is found in the plastid. It localises to the chloroplast thylakoid membrane. Component of the cytochrome b6-f complex, which mediates electron transfer between photosystem II (PSII) and photosystem I (PSI), cyclic electron flow around PSI, and state transitions. The sequence is that of Cytochrome b6 from Cucumis sativus (Cucumber).